The primary structure comprises 470 residues: Flavin-containing monooxygenase FMO GS-OX-like 6 (470 aa).

Gly17–Gly22 lines the FAD pocket. Residue Gly214–Gly219 coordinates NADP(+).

The protein belongs to the FMO family. Requires FAD as cofactor.

Catalyzes the conversion of methylthioalkyl glucosinolates of any chain length into methylsulfinylalkyl glucosinolates. The protein is Flavin-containing monooxygenase FMO GS-OX-like 6 of Arabidopsis thaliana (Mouse-ear cress).